A 535-amino-acid chain; its full sequence is uncharacterized protein (535 aa).

6 helical membrane-spanning segments follow: residues Leu-63–Tyr-83, Val-90–Ile-110, Val-143–Gly-163, Val-168–Cys-188, Ser-226–Val-246, and Val-258–Trp-278. The 52-residue stretch at Leu-279–Arg-330 folds into the HAMP domain. Residues Ala-362–Cys-486 form the Guanylate cyclase domain.

The protein belongs to the adenylyl cyclase class-3 family.

It is found in the cell membrane. This is an uncharacterized protein from Mycobacterium tuberculosis (strain ATCC 25618 / H37Rv).